The chain runs to 116 residues: Large ribosomal subunit protein uL18 (116 aa).

It belongs to the universal ribosomal protein uL18 family. As to quaternary structure, part of the 50S ribosomal subunit; part of the 5S rRNA/L5/L18/L25 subcomplex. Contacts the 5S and 23S rRNAs.

In terms of biological role, this is one of the proteins that bind and probably mediate the attachment of the 5S RNA into the large ribosomal subunit, where it forms part of the central protuberance. This Shewanella halifaxensis (strain HAW-EB4) protein is Large ribosomal subunit protein uL18.